A 130-amino-acid chain; its full sequence is Hydrogenase maturation factor HypA (130 aa).

Ni(2+) is bound at residue histidine 2. Residues cysteine 74, cysteine 77, cysteine 90, and cysteine 93 each coordinate Zn(2+).

This sequence belongs to the HypA/HybF family.

Functionally, involved in the maturation of [NiFe] hydrogenases. Required for nickel insertion into the metal center of the hydrogenase. The sequence is that of Hydrogenase maturation factor HypA from Desulfatibacillum aliphaticivorans.